Here is a 515-residue protein sequence, read N- to C-terminus: Maturase K (515 aa).

This sequence belongs to the intron maturase 2 family. MatK subfamily.

The protein resides in the plastid. The protein localises to the chloroplast. In terms of biological role, usually encoded in the trnK tRNA gene intron. Probably assists in splicing its own and other chloroplast group II introns. The protein is Maturase K of Pinus contorta (Shore pine).